The primary structure comprises 115 residues: U3-lycotoxin-Ls1k (115 aa).

The first 20 residues, 1-20 (MKFVLLFGVLVVTLFSYSSA), serve as a signal peptide directing secretion. Positions 21-44 (EMLDDFDQADEDELLSLIEKEEAR) are excised as a propeptide. Intrachain disulfides connect Cys-48/Cys-63, Cys-55/Cys-72, Cys-62/Cys-87, and Cys-74/Cys-85.

Belongs to the neurotoxin 19 (CSTX) family. 01 subfamily. As to expression, expressed by the venom gland.

It is found in the secreted. This Lycosa singoriensis (Wolf spider) protein is U3-lycotoxin-Ls1k.